Consider the following 473-residue polypeptide: ATP synthase subunit beta (473 aa).

158-165 (GGAGVGKT) contacts ATP.

Belongs to the ATPase alpha/beta chains family. F-type ATPases have 2 components, CF(1) - the catalytic core - and CF(0) - the membrane proton channel. CF(1) has five subunits: alpha(3), beta(3), gamma(1), delta(1), epsilon(1). CF(0) has three main subunits: a(1), b(2) and c(9-12). The alpha and beta chains form an alternating ring which encloses part of the gamma chain. CF(1) is attached to CF(0) by a central stalk formed by the gamma and epsilon chains, while a peripheral stalk is formed by the delta and b chains.

It localises to the cell membrane. It catalyses the reaction ATP + H2O + 4 H(+)(in) = ADP + phosphate + 5 H(+)(out). In terms of biological role, produces ATP from ADP in the presence of a proton gradient across the membrane. The catalytic sites are hosted primarily by the beta subunits. This is ATP synthase subunit beta from Priestia megaterium (strain ATCC 12872 / QMB1551) (Bacillus megaterium).